We begin with the raw amino-acid sequence, 416 residues long: Gamma-glutamyl phosphate reductase (416 aa).

It belongs to the gamma-glutamyl phosphate reductase family.

The protein resides in the cytoplasm. It carries out the reaction L-glutamate 5-semialdehyde + phosphate + NADP(+) = L-glutamyl 5-phosphate + NADPH + H(+). Its pathway is amino-acid biosynthesis; L-proline biosynthesis; L-glutamate 5-semialdehyde from L-glutamate: step 2/2. Its function is as follows. Catalyzes the NADPH-dependent reduction of L-glutamate 5-phosphate into L-glutamate 5-semialdehyde and phosphate. The product spontaneously undergoes cyclization to form 1-pyrroline-5-carboxylate. The protein is Gamma-glutamyl phosphate reductase of Streptococcus pyogenes serotype M6 (strain ATCC BAA-946 / MGAS10394).